Consider the following 164-residue polypeptide: Phosphopantetheine adenylyltransferase (164 aa).

Serine 9 provides a ligand contact to substrate. ATP contacts are provided by residues 9 to 10 (SF) and histidine 17. Substrate-binding residues include lysine 41, leucine 78, and arginine 92. Residues 93–95 (GLR), glutamate 103, and 128–134 (GRVITST) each bind ATP.

Belongs to the bacterial CoaD family. In terms of assembly, homohexamer. The cofactor is Mg(2+).

The protein localises to the cytoplasm. The enzyme catalyses (R)-4'-phosphopantetheine + ATP + H(+) = 3'-dephospho-CoA + diphosphate. Its pathway is cofactor biosynthesis; coenzyme A biosynthesis; CoA from (R)-pantothenate: step 4/5. In terms of biological role, reversibly transfers an adenylyl group from ATP to 4'-phosphopantetheine, yielding dephospho-CoA (dPCoA) and pyrophosphate. This chain is Phosphopantetheine adenylyltransferase, found in Bartonella bacilliformis (strain ATCC 35685 / KC583 / Herrer 020/F12,63).